A 284-amino-acid chain; its full sequence is Pseudouridine-5'-phosphate glycosidase (284 aa).

Catalysis depends on Glu17, which acts as the Proton donor. Lys77 and Val97 together coordinate substrate. Residue Asp126 participates in Mn(2+) binding. 128–130 (SQD) contacts substrate. Residue Lys147 is the Nucleophile of the active site.

It belongs to the pseudouridine-5'-phosphate glycosidase family. In terms of assembly, homotrimer. It depends on Mn(2+) as a cofactor.

It catalyses the reaction D-ribose 5-phosphate + uracil = psi-UMP + H2O. In terms of biological role, catalyzes the reversible cleavage of pseudouridine 5'-phosphate (PsiMP) to ribose 5-phosphate and uracil. Functions biologically in the cleavage direction, as part of a pseudouridine degradation pathway. The polypeptide is Pseudouridine-5'-phosphate glycosidase (Thermotoga neapolitana (strain ATCC 49049 / DSM 4359 / NBRC 107923 / NS-E)).